The following is a 115-amino-acid chain: Phosphoribosyl-AMP cyclohydrolase (115 aa).

Asp80 lines the Mg(2+) pocket. Cys81 is a Zn(2+) binding site. 2 residues coordinate Mg(2+): Asp82 and Asp84. Zn(2+)-binding residues include Cys97 and Cys104.

It belongs to the PRA-CH family. Homodimer. The cofactor is Mg(2+). Zn(2+) is required as a cofactor.

The protein localises to the cytoplasm. The enzyme catalyses 1-(5-phospho-beta-D-ribosyl)-5'-AMP + H2O = 1-(5-phospho-beta-D-ribosyl)-5-[(5-phospho-beta-D-ribosylamino)methylideneamino]imidazole-4-carboxamide. Its pathway is amino-acid biosynthesis; L-histidine biosynthesis; L-histidine from 5-phospho-alpha-D-ribose 1-diphosphate: step 3/9. Functionally, catalyzes the hydrolysis of the adenine ring of phosphoribosyl-AMP. The chain is Phosphoribosyl-AMP cyclohydrolase from Mycobacterium bovis (strain ATCC BAA-935 / AF2122/97).